The chain runs to 95 residues: Ribonuclease kappa (95 aa).

A run of 2 helical transmembrane segments spans residues G12–I32 and C68–M88.

It belongs to the RNase K family.

The protein localises to the membrane. In terms of biological role, endoribonuclease. Functionally, (Microbial infection) Required for the initial stages of clathrin-mediated endocytic uptake of a diverse set of flaviviruses, including dengue and West Nile. Not required for clathrin-mediated endocytosis and macropinocytosis. The chain is Ribonuclease kappa from Drosophila melanogaster (Fruit fly).